Consider the following 397-residue polypeptide: Tryptophan synthase beta chain (397 aa).

Lys-87 is modified (N6-(pyridoxal phosphate)lysine).

Belongs to the TrpB family. In terms of assembly, tetramer of two alpha and two beta chains. Requires pyridoxal 5'-phosphate as cofactor.

It catalyses the reaction (1S,2R)-1-C-(indol-3-yl)glycerol 3-phosphate + L-serine = D-glyceraldehyde 3-phosphate + L-tryptophan + H2O. It participates in amino-acid biosynthesis; L-tryptophan biosynthesis; L-tryptophan from chorismate: step 5/5. Functionally, the beta subunit is responsible for the synthesis of L-tryptophan from indole and L-serine. The sequence is that of Tryptophan synthase beta chain from Escherichia fergusonii (strain ATCC 35469 / DSM 13698 / CCUG 18766 / IAM 14443 / JCM 21226 / LMG 7866 / NBRC 102419 / NCTC 12128 / CDC 0568-73).